The sequence spans 416 residues: MKIYLVGGAVRDSLLNLPIKDKDFMVVGATPEQMLQLGYRQVGKDFPVFLHPKTQQEYALARTERKVGLGYGGFSCYASPEVTLEQDLLRRDLTINAIAQDEAGNLHDPFHGIADIEARQLRHVSAAFSEDPLRVLRVARFAARFHGLGFEIAPETMALMQHMSQTEELTALTPERVWQEVDKSLGGPHPEVFFEVLRQCGALKVLFPEIDALFGVPQPEKWHPEIDTGLHTMMVLAQSSSMTEEKAVRFAALVHDLGKALSPKEHWPKHHGHGQKGLPVIKSLCERLRVPNEYRDLALLVSDQHQNVHQAFELRSETIIKLFDKADFWRKPERLKQLLLACIADMRGRTGFEHQPYPQSDYLNACFLAANNVDVKAIIAAGFQGAQIKEVVNSKRIEMVAQVKQHWPGAQAKETP.

ATP is bound by residues Gly8 and Arg11. The CTP site is built by Gly8 and Arg11. Positions 21 and 23 each coordinate Mg(2+). Residues Arg91, Arg137, and Arg140 each coordinate ATP. The CTP site is built by Arg91, Arg137, and Arg140. One can recognise an HD domain in the interval 228-329 (TGLHTMMVLA…IKLFDKADFW (102 aa)).

This sequence belongs to the tRNA nucleotidyltransferase/poly(A) polymerase family. Bacterial CCA-adding enzyme type 1 subfamily. In terms of assembly, monomer. Can also form homodimers and oligomers. It depends on Mg(2+) as a cofactor. Ni(2+) serves as cofactor.

The catalysed reaction is a tRNA precursor + 2 CTP + ATP = a tRNA with a 3' CCA end + 3 diphosphate. It catalyses the reaction a tRNA with a 3' CCA end + 2 CTP + ATP = a tRNA with a 3' CCACCA end + 3 diphosphate. Its function is as follows. Catalyzes the addition and repair of the essential 3'-terminal CCA sequence in tRNAs without using a nucleic acid template. Adds these three nucleotides in the order of C, C, and A to the tRNA nucleotide-73, using CTP and ATP as substrates and producing inorganic pyrophosphate. tRNA 3'-terminal CCA addition is required both for tRNA processing and repair. Also involved in tRNA surveillance by mediating tandem CCA addition to generate a CCACCA at the 3' terminus of unstable tRNAs. While stable tRNAs receive only 3'-terminal CCA, unstable tRNAs are marked with CCACCA and rapidly degraded. This is Multifunctional CCA protein from Shewanella sp. (strain MR-4).